A 304-amino-acid chain; its full sequence is PTB domain-containing engulfment adapter protein 1 (304 aa).

Residue threonine 16 is modified to Phosphothreonine. One can recognise a PID domain in the interval 21-176; it reads SKHYIPYNAK…AGMQKRIQDL (156 aa). Positions 159–200 form a coiled coil; the sequence is DVETRKQIAGMQKRIQDLETENMELKNKVQDLESRLRTTQVS. Serine 223 is modified (phosphoserine).

It belongs to the ced-6 family. Homodimer. Interacts with clathrin and MEGF10. Interacts with GDP-bound ARF6, but not with GTP-bound ARF6. Part of a complex composed of GULP1, ACAP1 and ARF6. Interacts with ACAP1, LRP1 and STAB2. Detected throughout the brain, particularly in Purkinje cells, hippocampal and cortical neurons (at protein level).

The protein localises to the cytoplasm. Modulates cellular glycosphingolipid and cholesterol transport. May play a role in the internalization of various LRP1 ligands, such as PSAP. May function as an adapter protein. Required for efficient phagocytosis of apoptotic cells. Increases cellular levels of GTP-bound ARF6. The protein is PTB domain-containing engulfment adapter protein 1 (Gulp1) of Mus musculus (Mouse).